Reading from the N-terminus, the 205-residue chain is Holliday junction branch migration complex subunit RuvA (205 aa).

The domain I stretch occupies residues 1 to 63 (MIDFVEGTLS…EDAILLYGFA (63 aa)). Residues 64 to 142 (TRDERDLFRK…GYTPSAILTV (79 aa)) are domain II. A flexible linker region spans residues 143–153 (AAGDLTAGEQA). The domain III stretch occupies residues 153–205 (AVSALNEALDALTALGYSDGELQKIRNTLSEKSKEGDGVEKLIKQGLALLMRG).

This sequence belongs to the RuvA family. In terms of assembly, homotetramer. Forms an RuvA(8)-RuvB(12)-Holliday junction (HJ) complex. HJ DNA is sandwiched between 2 RuvA tetramers; dsDNA enters through RuvA and exits via RuvB. An RuvB hexamer assembles on each DNA strand where it exits the tetramer. Each RuvB hexamer is contacted by two RuvA subunits (via domain III) on 2 adjacent RuvB subunits; this complex drives branch migration. In the full resolvosome a probable DNA-RuvA(4)-RuvB(12)-RuvC(2) complex forms which resolves the HJ.

The protein resides in the cytoplasm. The RuvA-RuvB-RuvC complex processes Holliday junction (HJ) DNA during genetic recombination and DNA repair, while the RuvA-RuvB complex plays an important role in the rescue of blocked DNA replication forks via replication fork reversal (RFR). RuvA specifically binds to HJ cruciform DNA, conferring on it an open structure. The RuvB hexamer acts as an ATP-dependent pump, pulling dsDNA into and through the RuvAB complex. HJ branch migration allows RuvC to scan DNA until it finds its consensus sequence, where it cleaves and resolves the cruciform DNA. The sequence is that of Holliday junction branch migration complex subunit RuvA from Brevibacillus brevis (strain 47 / JCM 6285 / NBRC 100599).